The chain runs to 265 residues: uncharacterized protein (265 aa).

Thiamine diphosphate is bound at residue Glu47. Positions 204-247 are thiamine pyrophosphate binding; sequence QHQMWLVQHILRVARHCGFTVTTMEMTLIETQVRLKITVKSDRT.

The protein belongs to the TPP enzyme family. Mg(2+) is required as a cofactor. Thiamine diphosphate serves as cofactor.

Functionally, truncated acetolactase synthase; no longer catalytically active. This is an uncharacterized protein from Haemophilus influenzae (strain ATCC 51907 / DSM 11121 / KW20 / Rd).